Reading from the N-terminus, the 279-residue chain is Diaminopimelate epimerase (279 aa).

Substrate is bound by residues Asn-14 and Gln-68. Cys-77 acts as the Proton donor in catalysis. Substrate-binding positions include Gly-78–Asn-79, Asn-191, and Glu-207–Arg-208. Catalysis depends on Cys-217, which acts as the Proton acceptor. Gly-218–Thr-219 contributes to the substrate binding site.

It belongs to the diaminopimelate epimerase family. In terms of assembly, homodimer.

It localises to the cytoplasm. The enzyme catalyses (2S,6S)-2,6-diaminopimelate = meso-2,6-diaminopimelate. The protein operates within amino-acid biosynthesis; L-lysine biosynthesis via DAP pathway; DL-2,6-diaminopimelate from LL-2,6-diaminopimelate: step 1/1. Its function is as follows. Catalyzes the stereoinversion of LL-2,6-diaminopimelate (L,L-DAP) to meso-diaminopimelate (meso-DAP), a precursor of L-lysine. This chain is Diaminopimelate epimerase, found in Methanothrix thermoacetophila (strain DSM 6194 / JCM 14653 / NBRC 101360 / PT) (Methanosaeta thermophila).